The following is a 144-amino-acid chain: Large ribosomal subunit protein uL11 (144 aa).

Belongs to the universal ribosomal protein uL11 family. Part of the ribosomal stalk of the 50S ribosomal subunit. Interacts with L10 and the large rRNA to form the base of the stalk. L10 forms an elongated spine to which L12 dimers bind in a sequential fashion forming a multimeric L10(L12)X complex. One or more lysine residues are methylated.

Forms part of the ribosomal stalk which helps the ribosome interact with GTP-bound translation factors. The protein is Large ribosomal subunit protein uL11 of Legionella pneumophila (strain Paris).